A 556-amino-acid chain; its full sequence is 2-isopropylmalate synthase (556 aa).

The Pyruvate carboxyltransferase domain maps to 33-307; that stretch reads PIWLSSDLRD…DPQLDFSDID (275 aa). Residues Asp-42, His-246, His-248, and Asn-282 each coordinate Mg(2+). The segment at 439–556 is regulatory domain; the sequence is ATAPYTLKGH…ALHQAQEAAA (118 aa).

Belongs to the alpha-IPM synthase/homocitrate synthase family. LeuA type 2 subfamily. Homodimer. Mg(2+) is required as a cofactor.

It is found in the cytoplasm. It catalyses the reaction 3-methyl-2-oxobutanoate + acetyl-CoA + H2O = (2S)-2-isopropylmalate + CoA + H(+). It participates in amino-acid biosynthesis; L-leucine biosynthesis; L-leucine from 3-methyl-2-oxobutanoate: step 1/4. Its function is as follows. Catalyzes the condensation of the acetyl group of acetyl-CoA with 3-methyl-2-oxobutanoate (2-ketoisovalerate) to form 3-carboxy-3-hydroxy-4-methylpentanoate (2-isopropylmalate). The chain is 2-isopropylmalate synthase from Stutzerimonas stutzeri (strain A1501) (Pseudomonas stutzeri).